The following is a 783-amino-acid chain: Endonuclease MutS2 (783 aa).

Gly-328–Thr-335 serves as a coordination point for ATP. One can recognise a Smr domain in the interval Leu-708–Gly-783.

The protein belongs to the DNA mismatch repair MutS family. MutS2 subfamily. Homodimer. Binds to stalled ribosomes, contacting rRNA.

Its function is as follows. Endonuclease that is involved in the suppression of homologous recombination and thus may have a key role in the control of bacterial genetic diversity. Functionally, acts as a ribosome collision sensor, splitting the ribosome into its 2 subunits. Detects stalled/collided 70S ribosomes which it binds and splits by an ATP-hydrolysis driven conformational change. Acts upstream of the ribosome quality control system (RQC), a ribosome-associated complex that mediates the extraction of incompletely synthesized nascent chains from stalled ribosomes and their subsequent degradation. Probably generates substrates for RQC. This is Endonuclease MutS2 from Streptococcus thermophilus (strain ATCC BAA-250 / LMG 18311).